The following is a 273-amino-acid chain: MFKHTKMLQHPAKPDRPDPLFAKKMQEILGGQFGEISVAMQYLFQGWNTRGNEKYKDLLMDTATEELGHVEMIATMIARLLEDAPLDQQEKAAEDPVIGSILGGMNPHHAIVSGLGAMPESSTGVPWSGGYIVASGNLLADFRANLNAESQGRLQVARLFEMTDDKGVKDMLSFLLARDTMHQNQWLAAIKELEAQEGPVVPGTFPKALEKQEFSHQLINFSEGEVSAEQNWLNEKAPDGEAFEYVKEAKTFGEKPELKPAPPFVHNTLPGRE.

Glu35 contacts Mn(2+). Ca(2+) contacts are provided by Asp57 and Asp61. 4 residues coordinate Mn(2+): Glu66, His69, Glu149, and His182. Ca(2+) is bound by residues Asn220, Ser222, and Gly224. Residues 254–273 are disordered; that stretch reads EKPELKPAPPFVHNTLPGRE.

It belongs to the manganese catalase family. Requires Ca(2+) as cofactor. Mn(2+) serves as cofactor.

The catalysed reaction is 2 H2O2 = O2 + 2 H2O. In terms of biological role, catalyzes the decomposition of hydrogen peroxide into water and oxygen. This is Manganese catalase (ydbD) from Bacillus subtilis (strain 168).